The primary structure comprises 562 residues: Delta-1-pyrroline-5-carboxylate dehydrogenase, mitochondrial (562 aa).

The transit peptide at 1-23 directs the protein to the mitochondrion; that stretch reads MLPLPSLRRSLLSHAWRGAGLRW. An N6-succinyllysine modification is found at K30. Position 43 is a phosphoserine (S43). K51 is subject to N6-acetyllysine. N6-acetyllysine; alternate occurs at positions 92, 98, 113, 129, and 174. N6-succinyllysine; alternate occurs at positions 92, 98, 113, 129, and 174. Residues S207, K232, and 285–289 contribute to the NAD(+) site; that span reads GSVPT. E313 acts as the Proton acceptor in catalysis. N6-acetyllysine is present on K317. K346 bears the N6-succinyllysine mark. C347 acts as the Nucleophile in catalysis. K357 carries the post-translational modification N6-acetyllysine; alternate. K357 bears the N6-succinyllysine; alternate mark. Residues K364 and K375 each carry the N6-acetyllysine modification. K394 carries the post-translational modification N6-succinyllysine. E446 provides a ligand contact to NAD(+). At K461 the chain carries N6-acetyllysine. At K508 the chain carries N6-acetyllysine; alternate. K508 bears the N6-succinyllysine; alternate mark. S512 lines the substrate pocket. N6-acetyllysine occurs at positions 530 and 551.

The protein belongs to the aldehyde dehydrogenase family. As to quaternary structure, homodimer. Acetylation of Lys-98, Lys-113 and Lys-401 is observed in liver mitochondria from fasted mice but not from fed mice.

Its subcellular location is the mitochondrion matrix. The catalysed reaction is L-glutamate 5-semialdehyde + NAD(+) + H2O = L-glutamate + NADH + 2 H(+). It participates in amino-acid degradation; L-proline degradation into L-glutamate; L-glutamate from L-proline: step 2/2. In terms of biological role, irreversible conversion of delta-1-pyrroline-5-carboxylate (P5C), derived either from proline or ornithine, to glutamate. This is a necessary step in the pathway interconnecting the urea and tricarboxylic acid cycles. The preferred substrate is glutamic gamma-semialdehyde, other substrates include succinic, glutaric and adipic semialdehydes. The polypeptide is Delta-1-pyrroline-5-carboxylate dehydrogenase, mitochondrial (Aldh4a1) (Mus musculus (Mouse)).